The sequence spans 100 residues: Guanine nucleotide exchange factor MSS4 homolog (100 aa).

One can recognise an MSS4 domain in the interval 1–100 (MSNLRIVCQH…YLLLCSLEKN (100 aa)). Zn(2+) is bound by residues cysteine 8, cysteine 11, cysteine 73, and cysteine 76.

Belongs to the DSS4/MSS4 family.

Functionally, guanine-nucleotide-releasing protein that acts on members of the sec4/ypt1/rab subfamily. The polypeptide is Guanine nucleotide exchange factor MSS4 homolog (Schizosaccharomyces pombe (strain 972 / ATCC 24843) (Fission yeast)).